The sequence spans 169 residues: Regulator of sigma D (169 aa).

The protein belongs to the Rsd/AlgQ family. Interacts with RpoD.

The protein resides in the cytoplasm. In terms of biological role, binds RpoD and negatively regulates RpoD-mediated transcription activation by preventing the interaction between the primary sigma factor RpoD with the catalytic core of the RNA polymerase and with promoter DNA. May be involved in replacement of the RNA polymerase sigma subunit from RpoD to RpoS during the transition from exponential growth to the stationary phase. The polypeptide is Regulator of sigma D (Yersinia pestis).